We begin with the raw amino-acid sequence, 177 residues long: UPF0178 protein TP_0845 (177 aa).

The disordered stretch occupies residues glutamate 155–arginine 177.

This sequence belongs to the UPF0178 family.

The protein is UPF0178 protein TP_0845 of Treponema pallidum (strain Nichols).